The following is a 178-amino-acid chain: Photosystem I assembly protein Ycf4 (178 aa).

2 helical membrane-spanning segments follow: residues 19–39 (ILVAAMVTIGGVGFLFASLSS) and 61–81 (LVMGLYSIAAALLATYLWAVI).

The protein belongs to the Ycf4 family.

It is found in the cellular thylakoid membrane. Functionally, seems to be required for the assembly of the photosystem I complex. This is Photosystem I assembly protein Ycf4 from Synechococcus sp. (strain WH7803).